The following is a 372-amino-acid chain: Ciliary neurotrophic factor receptor subunit alpha (372 aa).

A signal peptide spans 1 to 22 (MAAPVPWACCAVLAAAAAVVYA). One can recognise an Ig-like C2-type domain in the interval 27 to 104 (PQEAPHVQYE…WHLRHQVLLH (78 aa)). Residues C46 and C89 are joined by a disulfide bond. 4 N-linked (GlcNAc...) asparagine glycosylation sites follow: N60, N70, N142, and N190. Fibronectin type-III domains lie at 108–205 (PPRE…VKPD) and 206–306 (PPEN…TEEP). Positions 290–294 (WSDWS) match the WSXWS motif motif. The tract at residues 301 to 340 (PWTEEPRHLTTEAQAPETTTSTTSSLAPPPTTKICDPGEL) is disordered. The segment covering 311-326 (TEAQAPETTTSTTSSL) has biased composition (low complexity). A lipid anchor (GPI-anchor amidated serine) is attached at S342. Positions 343–372 (GGGPSAPFLIHVPVTLALAAAAATANSLLI) are cleaved as a propeptide — removed in mature form.

It belongs to the type I cytokine receptor family. Type 3 subfamily. Forms a heterotrimer with LIFR and IL6ST. Interacts with heterodimeric neurotropic cytokine composed of CLCF1/CLC and CRLF1/CLF-1. Either alone or in complex with the heterodimer CLCF1-CRLF1 interacts with SORL1; this interaction may promote internalization and lysosomal degradation. As to expression, expressed in retina, brain, spleen, lung, liver and kidney. In the retina it is highly expressed by photoreceptors, but also found in the RPE, inner nuclear layer and ganglion cells.

The protein resides in the cell membrane. In terms of biological role, binds to CNTF. The alpha subunit provides the receptor specificity. This Canis lupus familiaris (Dog) protein is Ciliary neurotrophic factor receptor subunit alpha (CNTFR).